The sequence spans 398 residues: Elongation factor Tu (398 aa).

Residues 10-207 form the tr-type G domain; the sequence is KPHVNIGTIG…TVDEYIPEPE (198 aa). The interval 19–26 is G1; sequence GHVDHGKT. 19–26 contributes to the GTP binding site; sequence GHVDHGKT. Thr-26 lines the Mg(2+) pocket. The segment at 63–67 is G2; that stretch reads GITIN. The interval 84–87 is G3; it reads DAPG. GTP-binding positions include 84 to 88 and 139 to 142; these read DAPGH and NKVD. Positions 139–142 are G4; the sequence is NKVD. The tract at residues 177–179 is G5; that stretch reads SAL.

Belongs to the TRAFAC class translation factor GTPase superfamily. Classic translation factor GTPase family. EF-Tu/EF-1A subfamily. Monomer.

The protein localises to the cytoplasm. It carries out the reaction GTP + H2O = GDP + phosphate + H(+). In terms of biological role, GTP hydrolase that promotes the GTP-dependent binding of aminoacyl-tRNA to the A-site of ribosomes during protein biosynthesis. This Streptococcus agalactiae serotype Ia (strain ATCC 27591 / A909 / CDC SS700) protein is Elongation factor Tu.